Consider the following 414-residue polypeptide: Nuclear hormone receptor family member nhr-213 (414 aa).

Positions 21-99 (IVLCKVCALS…LGMTPENVQF (79 aa)) form a DNA-binding region, nuclear receptor. 2 NR C4-type zinc fingers span residues 24–44 (CKVC…CRAC) and 62–82 (CKKG…CRLC). Residues 162 to 414 (SAAKKMNSLE…DFSDPDIFDC (253 aa)) form the NR LBD domain.

The protein belongs to the nuclear hormone receptor family.

It is found in the nucleus. Its function is as follows. Orphan nuclear receptor. This chain is Nuclear hormone receptor family member nhr-213 (nhr-213), found in Caenorhabditis elegans.